The sequence spans 96 residues: (4S)-4-hydroxy-5-phosphonooxypentane-2,3-dione isomerase (96 aa).

The ABM domain occupies 2–91 (HVTLVEINVK…MTGPRKKTVF (90 aa)).

It belongs to the LsrG family. Homodimer.

Its subcellular location is the cytoplasm. The enzyme catalyses (2S)-2-hydroxy-3,4-dioxopentyl phosphate = 3-hydroxy-2,4-dioxopentyl phosphate. Functionally, involved in the degradation of phospho-AI-2, thereby terminating induction of the lsr operon and closing the AI-2 signaling cycle. Catalyzes the conversion of (4S)-4-hydroxy-5-phosphonooxypentane-2,3-dione (P-DPD) to 3-hydroxy-5-phosphonooxypentane-2,4-dione (P-HPD). The protein is (4S)-4-hydroxy-5-phosphonooxypentane-2,3-dione isomerase of Yersinia pseudotuberculosis serotype O:1b (strain IP 31758).